Here is a 132-residue protein sequence, read N- to C-terminus: Transmembrane protein 170B (132 aa).

At 1-37 (MKAEGGDHSMINLSVQQVLSLWAHGTVLRNLTEMWYW) the chain is on the extracellular side. Asn12 carries N-linked (GlcNAc...) asparagine glycosylation. The helical transmembrane segment at 38–58 (IFLWALFSSLFVHGAAGVLMF) threads the bilayer. Over 59-68 (VMLQRHRQGR) the chain is Cytoplasmic. The chain crosses the membrane as a helical span at residues 69–89 (VISVIAVSIGFLASVTGAMIT). The Extracellular segment spans residues 90-104 (SAAVAGIYRVAGKNM). The chain crosses the membrane as a helical span at residues 105–125 (APLEALVWGVGQTVLTLIISF). Over 126-132 (SRILATL) the chain is Cytoplasmic.

Belongs to the TMEM170 family. Interacts with CTNNB1. In terms of tissue distribution, expressed in normal breast tissues. Down-regulated in breast cancer cells (at protein level).

The protein resides in the cell membrane. Negatively regulates the canonical Wnt signaling in breast cancer cells. Exerts an inhibitory effect on breast cancer growth by inhibiting CTNNB1 stabilization and nucleus translocation, which reduces the activity of Wnt targets. This Homo sapiens (Human) protein is Transmembrane protein 170B (TMEM170B).